The primary structure comprises 500 residues: MSEVEHQELDLNGEMLARREKLAKLREQGNPFPNTFRRDAYAEKLHAQYDEVEGEALKEQDIQVKVAGRIMLKRVMGKASFFTIQDVSGQIQLYVARDNLAEGVYADKVSMWDLGDIVGAAGTLFKTKTGELTVRCSEVELLTKSLRPLPNKVQGLTDQETRYRQRYLDLISNEESRRTFMIRSKMVSGIRQFFLEKDFIEVETPMLQVIPGGAAAKPFITHHNALDVDMYLRIAPELYLKRLVVGGFERVFELNRNFRNEGVSVRHNPEFTMIEYYQAYADYHDLMDNTEELLRKLAIDILGTTTVPYGEYVFDFGKPFERITMHDAIVKYGNGITREDLDSFEKSVEIAKGLGIEIQKSWGLGSVVNAIFEEVAEHQLIQPTFLMAHPAEISPLARRNDENPEVTDRFELFIGGREIGNGFSELNDAEDQAERFDAQVAAKDAGDDEAMFKDEDFVVALEHGLPPTAGEGLGIDRLAMIFANAPSIRDVILFPAMRQK.

The Mg(2+) site is built by E411 and E418.

Belongs to the class-II aminoacyl-tRNA synthetase family. Homodimer. Requires Mg(2+) as cofactor.

It localises to the cytoplasm. It catalyses the reaction tRNA(Lys) + L-lysine + ATP = L-lysyl-tRNA(Lys) + AMP + diphosphate. This Actinobacillus pleuropneumoniae serotype 7 (strain AP76) protein is Lysine--tRNA ligase.